Reading from the N-terminus, the 183-residue chain is MMPLLNTITTPYAEAFLQVAENRNEVDEVVAQSKSLLELWGQSSEFSEAMASPVLEVETKKAVLEKIFSKEITPSFLNLLKLLADRKRIGYLDAVLERLLELYREQRNIALATVTSATSLNEDQQAEILKTVQSVAGTDNLELNLKVDPNLIGGFVVNVGSKVIDASLSSQVRRLGLALAKVS.

The protein belongs to the ATPase delta chain family. In terms of assembly, F-type ATPases have 2 components, F(1) - the catalytic core - and F(0) - the membrane proton channel. F(1) has five subunits: alpha(3), beta(3), gamma(1), delta(1), epsilon(1). CF(0) has four main subunits: a(1), b(1), b'(1) and c(10-14). The alpha and beta chains form an alternating ring which encloses part of the gamma chain. F(1) is attached to F(0) by a central stalk formed by the gamma and epsilon chains, while a peripheral stalk is formed by the delta, b and b' chains.

It is found in the cellular thylakoid membrane. F(1)F(0) ATP synthase produces ATP from ADP in the presence of a proton or sodium gradient. F-type ATPases consist of two structural domains, F(1) containing the extramembraneous catalytic core and F(0) containing the membrane proton channel, linked together by a central stalk and a peripheral stalk. During catalysis, ATP synthesis in the catalytic domain of F(1) is coupled via a rotary mechanism of the central stalk subunits to proton translocation. In terms of biological role, this protein is part of the stalk that links CF(0) to CF(1). It either transmits conformational changes from CF(0) to CF(1) or is implicated in proton conduction. The protein is ATP synthase subunit delta of Prochlorococcus marinus (strain SARG / CCMP1375 / SS120).